The following is a 199-amino-acid chain: Prefoldin subunit 3 (199 aa).

Residue M1 is modified to N-acetylmethionine.

This sequence belongs to the prefoldin subunit alpha family. As to quaternary structure, heterohexamer of two PFD-alpha type and four PFD-beta type subunits.

Its function is as follows. Binds specifically to cytosolic chaperonin (c-CPN) and transfers target proteins to it. Binds to nascent polypeptide chain and promotes folding in an environment in which there are many competing pathways for nonnative proteins. The polypeptide is Prefoldin subunit 3 (PAC10) (Saccharomyces cerevisiae (strain ATCC 204508 / S288c) (Baker's yeast)).